Here is a 387-residue protein sequence, read N- to C-terminus: MFDLARQTRIILLLGIDVTFFFIEIITGYAIDSLALIADSFHMLNDIVSLLVALWATRLAHSTSHEPKYTYGWQRAEILGALSNGVFLIALCMFIFMEAIERFIEPPSVSNPTLMFFVGSLGLLSNFVGIFLFHDHGHDHPHTHTAQNYDFPEEDDIESVLPSTIVHRCNTSQQEVSHTHTQVADSATESSPLLSYTGNHNGAGTSKPVNNHGSIEQDAPKQTKKRNLNMHGVFLHVLGDALGNIGVISAALFIKYTDYSWRFLFDPCISILLTFIILFSAIPLCKSAALILLQVAPQSIKLDDVSNLINHLDGVESVHELHIWQLSDVKLIATVHVCVTLPDDKGESYTKLTTDIRNVLQSFGIYDVTIQPEFANHPLLCDQGSSS.

Helical transmembrane passes span 10-30 (IILL…TGYA), 34-54 (LALI…LVAL), 77-97 (EILG…FIFM), and 113-133 (TLMF…IFLF). Positions 195-214 (SYTGNHNGAGTSKPVNNHGS) are enriched in polar residues. The segment at 195–221 (SYTGNHNGAGTSKPVNNHGSIEQDAPK) is disordered. 2 consecutive transmembrane segments (helical) span residues 234–254 (FLHV…ALFI) and 263–283 (FLFD…SAIP).

This sequence belongs to the cation diffusion facilitator (CDF) transporter (TC 2.A.4) family. SLC30A subfamily.

It localises to the endoplasmic reticulum membrane. The protein resides in the nucleus membrane. Involved in zinc homeostasis, where it plays a role in its accumulation in the endoplasmic reticulum/nucleus. Also has a role in the sequestration of cadmium into the endoplasmic reticulum. This chain is Zinc homeostasis factor 1 (zhf1), found in Schizosaccharomyces pombe (strain 972 / ATCC 24843) (Fission yeast).